The chain runs to 97 residues: Aspartyl/glutamyl-tRNA(Asn/Gln) amidotransferase subunit C (97 aa).

Belongs to the GatC family. Heterotrimer of A, B and C subunits.

It carries out the reaction L-glutamyl-tRNA(Gln) + L-glutamine + ATP + H2O = L-glutaminyl-tRNA(Gln) + L-glutamate + ADP + phosphate + H(+). The catalysed reaction is L-aspartyl-tRNA(Asn) + L-glutamine + ATP + H2O = L-asparaginyl-tRNA(Asn) + L-glutamate + ADP + phosphate + 2 H(+). In terms of biological role, allows the formation of correctly charged Asn-tRNA(Asn) or Gln-tRNA(Gln) through the transamidation of misacylated Asp-tRNA(Asn) or Glu-tRNA(Gln) in organisms which lack either or both of asparaginyl-tRNA or glutaminyl-tRNA synthetases. The reaction takes place in the presence of glutamine and ATP through an activated phospho-Asp-tRNA(Asn) or phospho-Glu-tRNA(Gln). In Anaeromyxobacter dehalogenans (strain 2CP-C), this protein is Aspartyl/glutamyl-tRNA(Asn/Gln) amidotransferase subunit C.